Consider the following 88-residue polypeptide: UPF0297 protein Ccel_2240 (88 aa).

The protein belongs to the UPF0297 family.

The protein is UPF0297 protein Ccel_2240 of Ruminiclostridium cellulolyticum (strain ATCC 35319 / DSM 5812 / JCM 6584 / H10) (Clostridium cellulolyticum).